The sequence spans 316 residues: tRNA uridine(34) hydroxylase (316 aa).

The region spanning 123–217 is the Rhodanese domain; it reads LDEDTVVIDA…YGKNPETRGE (95 aa). The active-site Cysteine persulfide intermediate is the Cys177.

This sequence belongs to the TrhO family.

The enzyme catalyses uridine(34) in tRNA + AH2 + O2 = 5-hydroxyuridine(34) in tRNA + A + H2O. Its function is as follows. Catalyzes oxygen-dependent 5-hydroxyuridine (ho5U) modification at position 34 in tRNAs. The protein is tRNA uridine(34) hydroxylase of Enterococcus faecalis (strain ATCC 700802 / V583).